A 388-amino-acid polypeptide reads, in one-letter code: Chorismate synthase (388 aa).

2 residues coordinate NADP(+): arginine 39 and arginine 45. Residues 130–132 (RSS), 251–252 (NA), glycine 296, 311–315 (KPIPT), and arginine 337 each bind FMN.

This sequence belongs to the chorismate synthase family. As to quaternary structure, homotetramer. FMNH2 is required as a cofactor.

It carries out the reaction 5-O-(1-carboxyvinyl)-3-phosphoshikimate = chorismate + phosphate. The protein operates within metabolic intermediate biosynthesis; chorismate biosynthesis; chorismate from D-erythrose 4-phosphate and phosphoenolpyruvate: step 7/7. Functionally, catalyzes the anti-1,4-elimination of the C-3 phosphate and the C-6 proR hydrogen from 5-enolpyruvylshikimate-3-phosphate (EPSP) to yield chorismate, which is the branch point compound that serves as the starting substrate for the three terminal pathways of aromatic amino acid biosynthesis. This reaction introduces a second double bond into the aromatic ring system. The polypeptide is Chorismate synthase (Streptococcus agalactiae serotype V (strain ATCC BAA-611 / 2603 V/R)).